Here is a 173-residue protein sequence, read N- to C-terminus: N-alpha-acetyltransferase 20 (173 aa).

The N-acetyltransferase domain maps to 2 to 151 (TTIRRFVCDD…DALDMRKALP (150 aa)).

It belongs to the acetyltransferase family. ARD1 subfamily.

In terms of biological role, seems to be involved in N-acetylation. This chain is N-alpha-acetyltransferase 20 (nat5), found in Dictyostelium discoideum (Social amoeba).